A 394-amino-acid polypeptide reads, in one-letter code: p-hydroxybenzoate hydroxylase (394 aa).

FAD is bound by residues S13, E32, 42–47, and Q102; that span reads RIRAGV. Substrate contacts are provided by residues Y201, 212–214, and Y222; that span reads SQR. D286 lines the FAD pocket. P293 contributes to the substrate binding site. 299-300 provides a ligand contact to FAD; sequence LN.

This sequence belongs to the aromatic-ring hydroxylase family. In terms of assembly, homodimer. Requires FAD as cofactor.

The catalysed reaction is 4-hydroxybenzoate + NADPH + O2 + H(+) = 3,4-dihydroxybenzoate + NADP(+) + H2O. The protein operates within aromatic compound metabolism; benzoate degradation via hydroxylation; 3,4-dihydroxybenzoate from benzoate: step 2/2. Functionally, catalyzes the incorporation of an atom of dioxygen into p-hydroxybenzoate (p-OHB) to form 3,4-dihydroxybenzoate (3,4DOHB). The reaction occurs in two parts: reduction of the flavin adenine dinucleotide (FAD) in the enzyme by reduced nicotinamide adenine dinucleotide phosphate (NADPH) in response to binding p-hydroxybenzoate to the enzyme and oxidation of reduced FAD with oxygen to form a hydroperoxide, which then oxygenates p-hydroxybenzoate. This chain is p-hydroxybenzoate hydroxylase (pobA), found in Pseudomonas fluorescens.